The sequence spans 744 residues: 6-phosphofructo-2-kinase/fructose-2,6-bisphosphatase (744 aa).

Disordered regions lie at residues 1–23 (MGSGASKNTEEDDDGSNGGGGQL) and 213–245 (RSLSASGSFRNDSTPKAAQRNSEDSGVTVDGSP). Gly2 carries the N-myristoyl glycine lipid modification. The region spanning 17-122 (NGGGGQLYVS…GDARLALFRL (106 aa)) is the CBM20 domain. Positions 213-232 (RSLSASGSFRNDSTPKAAQR) are enriched in polar residues. Position 220 is a phosphoserine; by CPK3 (Ser220). A phosphoserine mark is found at Ser276 and Ser295. Residues 301 to 549 (SLSASSFLID…VFFLVNTHLT (249 aa)) form a 6-phosphofructo-2-kinase region. Ser303 carries the post-translational modification Phosphoserine; by CPK3. 349–357 (GLPARGKTF) serves as a coordination point for ATP. Beta-D-fructose 6-phosphate-binding residues include Arg382 and Arg406. Asp431 is a catalytic residue. Residues Thr433 and Arg439 each contribute to the beta-D-fructose 6-phosphate site. Cys460 is an active-site residue. 469 to 474 (NIRLKI) is an ATP binding site. Beta-D-fructose 6-phosphate contacts are provided by Arg496 and Tyr500. The segment at 550–744 (PRPILLTRHG…VQEKRYKLMD (195 aa)) is fructose-2,6-bisphosphatase. Arg557 lines the beta-D-fructose 2,6-bisphosphate pocket. Catalysis depends on His558, which acts as the Tele-phosphohistidine intermediate. Residues Asn564 and Gly570 each contribute to the beta-D-fructose 2,6-bisphosphate site. Glu630 acts as the Proton donor/acceptor in catalysis. The beta-D-fructose 2,6-bisphosphate site is built by Tyr641, Arg655, Lys659, Tyr670, Gln697, and Arg701. ATP is bound at residue 652–655 (YESR). 697-701 (QAVLR) serves as a coordination point for ATP.

It in the C-terminal section; belongs to the phosphoglycerate mutase family. Interacts with 14-3-3 proteins; these interactions may regulate both nitrate assimilation and sucrose/starch partitioning in leaves during the diurnal cycle. Post-translationally, phosphorylation at Ser-220 and Ser-303 by CPK3 promotes 14-3-3 proteins binding.

It is found in the membrane. The protein resides in the cytoplasm. The catalysed reaction is beta-D-fructose 2,6-bisphosphate + H2O = beta-D-fructose 6-phosphate + phosphate. The enzyme catalyses beta-D-fructose 6-phosphate + ATP = beta-D-fructose 2,6-bisphosphate + ADP + H(+). With respect to regulation, 6-phosphofructo-2-kinase activity is activated by pyruvate. 6-phosphofructo-2-kinase activity is inhibited by PPi, phosphoenolpyruvate and 2-phosphoglycerate. Fructose-2,6-bisphosphatase activity is inhibited by pyruvate, fructose 1,6-bisphosphate and 6-phosphogluconate. In terms of biological role, synthesis and degradation of fructose 2,6-bisphosphate. Regulates carbon partitioning between sucrose versus starch during the diurnal cycle. This chain is 6-phosphofructo-2-kinase/fructose-2,6-bisphosphatase (FKFBP), found in Arabidopsis thaliana (Mouse-ear cress).